Consider the following 931-residue polypeptide: Protocadherin gamma-A1 (931 aa).

The first 28 residues, methionine 1 to alanine 28, serve as a signal peptide directing secretion. Cadherin domains are found at residues glycine 29–phenylalanine 133, glutamine 134–phenylalanine 242, threonine 243–valine 347, threonine 348–phenylalanine 452, histidine 453–isoleucine 562, and aspartate 570–alanine 682. Residues glycine 29–tyrosine 692 are Extracellular-facing. N-linked (GlcNAc...) asparagine glycans are attached at residues asparagine 265, asparagine 419, and asparagine 545. N-linked (GlcNAc...) asparagine glycosylation is present at asparagine 685. A helical transmembrane segment spans residues leucine 693–alanine 713. Over histidine 714–lysine 931 the chain is Cytoplasmic. Disordered regions lie at residues lysine 801–asparagine 840 and alanine 901–lysine 931. Residues phenylalanine 805–asparagine 840 are compositionally biased toward polar residues. A compositionally biased stretch (basic residues) spans asparagine 921–lysine 931.

It is found in the cell membrane. Its function is as follows. Potential calcium-dependent cell-adhesion protein. May be involved in the establishment and maintenance of specific neuronal connections in the brain. This chain is Protocadherin gamma-A1 (PCDHGA1), found in Homo sapiens (Human).